We begin with the raw amino-acid sequence, 987 residues long: AP3-complex subunit beta-A (987 aa).

The tract at residues 586 to 662 (QDQLSDLDKQ…ISETSVSADQ (77 aa)) is disordered. Residues 603 to 613 (DGSEESSETGD) are compositionally biased toward acidic residues. A compositionally biased stretch (low complexity) spans 614 to 631 (ENGSSDYDSESSNGSDFS).

This sequence belongs to the adaptor complexes large subunit family. Adaptor protein complex 3 (AP-3) is a heterotetramer composed of two large adaptins (delta-type subunit and beta-type subunit), a medium adaptin (mu-type subunit) and a small adaptin (sigma-type subunit).

The protein localises to the cytoplasm. It is found in the golgi apparatus. The protein resides in the cytoplasmic vesicle membrane. In terms of biological role, part of the AP-3 complex, an adaptor-related complex which seems to be clathrin-associated. The complex is associated with the Golgi region as well as more peripheral structures. It facilitates the budding of vesicles from the Golgi membrane and may be directly involved in trafficking to the vacuole. It also function in maintaining the identity of lytic vacuoles and in regulating the transition between storage and lytic vacuoles. The sequence is that of AP3-complex subunit beta-A (AP3BA) from Arabidopsis thaliana (Mouse-ear cress).